The following is a 143-amino-acid chain: Large ribosomal subunit protein uL15 (143 aa).

A disordered region spans residues 1 to 52 (MELNTIQPADGAKHYKRRVGRGIGSGLGKTAGRGHKGQKSRSGGFHKVGFEG). The segment covering 21 to 31 (RGIGSGLGKTA) has biased composition (gly residues).

Belongs to the universal ribosomal protein uL15 family. In terms of assembly, part of the 50S ribosomal subunit.

Binds to the 23S rRNA. In Herminiimonas arsenicoxydans, this protein is Large ribosomal subunit protein uL15.